The primary structure comprises 680 residues: NADPH--cytochrome P450 reductase (680 aa).

The Lumenal portion of the chain corresponds to 1 to 5; sequence MALDK. A helical transmembrane segment spans residues 6-23; that stretch reads LDLYVIIVLAVAVAAYFA. At 24–680 the chain is on the cytoplasmic side; it reads KNQFLDQPQD…VQNRYQEDVW (657 aa). The Flavodoxin-like domain maps to 60-204; it reads TLLLFGSQTG…DFLTWKDNVF (145 aa). FMN contacts are provided by residues 66-71, 117-120, 152-161, and aspartate 187; these read SQTGTA, ATYG, and LGNSTYEFYN. The FAD-binding FR-type domain maps to 264–509; it reads THPYLAKISK…SGPRNKFNKF (246 aa). Arginine 283 provides a ligand contact to NADP(+). Residues 439–442, 457–459, and 473–476 contribute to the FAD site; these read RYYS, TAV, and GVVT. NADP(+) is bound by residues threonine 537, 599–600, 606–610, and aspartate 642; these read SR and KVYVQ. An FAD-binding site is contributed by tryptophan 680.

The protein belongs to the NADPH--cytochrome P450 reductase family. This sequence in the N-terminal section; belongs to the flavodoxin family. It in the C-terminal section; belongs to the flavoprotein pyridine nucleotide cytochrome reductase family. It depends on FAD as a cofactor. FMN is required as a cofactor.

Its subcellular location is the endoplasmic reticulum membrane. It is found in the mitochondrion outer membrane. It localises to the cell membrane. It catalyses the reaction 2 oxidized [cytochrome P450] + NADPH = 2 reduced [cytochrome P450] + NADP(+) + H(+). Functionally, this enzyme is required for electron transfer from NADP to cytochrome P450 in microsomes. It can also provide electron transfer to heme oxygenase and cytochrome B5. Involved in ergosterol biosynthesis. In Candida maltosa (Yeast), this protein is NADPH--cytochrome P450 reductase.